A 306-amino-acid polypeptide reads, in one-letter code: Ribonuclease Z (306 aa).

Zn(2+) contacts are provided by H63, H65, D67, H68, H140, D211, and H269. Residue D67 is the Proton acceptor of the active site.

The protein belongs to the RNase Z family. As to quaternary structure, homodimer. Zn(2+) is required as a cofactor.

The enzyme catalyses Endonucleolytic cleavage of RNA, removing extra 3' nucleotides from tRNA precursor, generating 3' termini of tRNAs. A 3'-hydroxy group is left at the tRNA terminus and a 5'-phosphoryl group is left at the trailer molecule.. In terms of biological role, zinc phosphodiesterase, which displays some tRNA 3'-processing endonuclease activity. Probably involved in tRNA maturation, by removing a 3'-trailer from precursor tRNA. This is Ribonuclease Z from Listeria monocytogenes serotype 4a (strain HCC23).